A 466-amino-acid polypeptide reads, in one-letter code: Asparagine--tRNA ligase (466 aa).

This sequence belongs to the class-II aminoacyl-tRNA synthetase family. Homodimer.

Its subcellular location is the cytoplasm. It catalyses the reaction tRNA(Asn) + L-asparagine + ATP = L-asparaginyl-tRNA(Asn) + AMP + diphosphate + H(+). This is Asparagine--tRNA ligase from Buchnera aphidicola subsp. Schizaphis graminum (strain Sg).